Consider the following 504-residue polypeptide: Maturase K (504 aa).

Belongs to the intron maturase 2 family. MatK subfamily.

It is found in the plastid. It localises to the chloroplast. Functionally, usually encoded in the trnK tRNA gene intron. Probably assists in splicing its own and other chloroplast group II introns. The polypeptide is Maturase K (Aruncus dioicus (Goat's beard)).